Consider the following 659-residue polypeptide: 1,4-alpha-glucan branching enzyme GlgB (659 aa).

Over residues 1 to 12 the composition is skewed to basic and acidic residues; sequence MRNCKELKHEKN. The segment at 1–25 is disordered; sequence MRNCKELKHEKNGNVTEKIGKNKGK. Aspartate 337 serves as the catalytic Nucleophile. Glutamate 390 acts as the Proton donor in catalysis.

Belongs to the glycosyl hydrolase 13 family. GlgB subfamily. Monomer.

The catalysed reaction is Transfers a segment of a (1-&gt;4)-alpha-D-glucan chain to a primary hydroxy group in a similar glucan chain.. It functions in the pathway glycan biosynthesis; glycogen biosynthesis. Functionally, catalyzes the formation of the alpha-1,6-glucosidic linkages in glycogen by scission of a 1,4-alpha-linked oligosaccharide from growing alpha-1,4-glucan chains and the subsequent attachment of the oligosaccharide to the alpha-1,6 position. This chain is 1,4-alpha-glucan branching enzyme GlgB, found in Clostridium perfringens (strain ATCC 13124 / DSM 756 / JCM 1290 / NCIMB 6125 / NCTC 8237 / Type A).